The following is a 153-amino-acid chain: 3-hydroxyacyl-[acyl-carrier-protein] dehydratase FabZ (153 aa).

Residue His-57 is part of the active site.

Belongs to the thioester dehydratase family. FabZ subfamily.

The protein resides in the cytoplasm. The enzyme catalyses a (3R)-hydroxyacyl-[ACP] = a (2E)-enoyl-[ACP] + H2O. In terms of biological role, involved in unsaturated fatty acids biosynthesis. Catalyzes the dehydration of short chain beta-hydroxyacyl-ACPs and long chain saturated and unsaturated beta-hydroxyacyl-ACPs. This chain is 3-hydroxyacyl-[acyl-carrier-protein] dehydratase FabZ, found in Vibrio cholerae serotype O1 (strain ATCC 39315 / El Tor Inaba N16961).